Reading from the N-terminus, the 847-residue chain is MADSKISPGMQQYLDIKAQYPDAFLLFRMGDFYELFYDDAVKAAQLLEIGLTSRNKNAENPIPMAGVPHHSAQQYIDILIELGYKVAIAEQMEDPKKAVGVVKREVVQVITPGTVVDSAKPNSSNNFLIAIDFDGSHYGLSYMDLVTGEFFATTLSDFMSVCGEILNLKAKEVVIGFEITAEQEEQLQKQFRLLLSYEQEIYTDDTLINPNLSQVEKNVAGKLLQYVHQTQMRELSHLQELIHYDIKDYLQMSYATKSSLDLIENARTKKKHGSLYWLLDETKTAMGMRLLKTWIDRPLISKQAISERQNIVETFLESFIERSDLADSLKGVYDIERLSSRVSFGKVNPKDLLQLGHTLSQVPYIKAVLEAINSPHLSKVIATIDPIPELESLIHSAIDPDAPATISEGSIIKTGFDQRLDHYRKVMKEGTGWIADIEMKERQASGINNLKIDYNKKDGYYFHVTNSNLSLVPDHFFRKATLKNSERYGTAELAKIEGQMLEAREESAQLEYDIFMRIREKVETYIDRLQTLAKAIATVDVLQGLAYVAEKNHYVRPEFASQKVITIQNGRHAVVEKVMGVQEYIPNTIQFNQNTSIQLITGPNMSGKSTYMRQLALTVIMAQMGSYVAADYAKLPIFDAIFTRIGAADDLISGQSTFMVEMMEANQAIQRASHDSLIIFDELGRGTATYDGMALAQSIIEHIHNRIGAITLFATHYHELTSLSEELGHLKNVHVAILERDGEVTFLHKIAEGPADKSYGIHVAKIAGLPGSLLSRADNILKQLESHSKDFIIKDNSQQSEENEPLNLLTEETSSQDIINRLKEVDVMNMTPMEAMTVLFDLKKKIK.

602 to 609 provides a ligand contact to ATP; that stretch reads GPNMSGKS.

Belongs to the DNA mismatch repair MutS family.

This protein is involved in the repair of mismatches in DNA. It is possible that it carries out the mismatch recognition step. This protein has a weak ATPase activity. In Streptococcus uberis (strain ATCC BAA-854 / 0140J), this protein is DNA mismatch repair protein MutS.